Reading from the N-terminus, the 304-residue chain is Glutaminase (304 aa).

Positions 63, 114, 158, 165, 189, 240, and 258 each coordinate substrate.

It belongs to the glutaminase family. As to quaternary structure, homotetramer.

It catalyses the reaction L-glutamine + H2O = L-glutamate + NH4(+). The sequence is that of Glutaminase from Shewanella baltica (strain OS195).